Reading from the N-terminus, the 194-residue chain is MTYLGSIEALLFVAGEDGLSLRQMAELLSLTPSALIQQLEKLAKRYEEDDDSSLLLLETAQTYKLVTKDSYMTLLRDYAKAPINQSLSRASLEVLSIIAYKQPITRIEIDDIRGVNSSGAITRLIAFGLIKEAGKKEVLGRPNLYETTNYFLDYMGINQLDDLIDASSIELVDEEVSLFSMDSINTEDKENNEN.

Belongs to the ScpB family. As to quaternary structure, homodimer. Homodimerization may be required to stabilize the binding of ScpA to the Smc head domains. Component of a cohesin-like complex composed of ScpA, ScpB and the Smc homodimer, in which ScpA and ScpB bind to the head domain of Smc. The presence of the three proteins is required for the association of the complex with DNA.

It is found in the cytoplasm. Its function is as follows. Participates in chromosomal partition during cell division. May act via the formation of a condensin-like complex containing Smc and ScpA that pull DNA away from mid-cell into both cell halves. The chain is Segregation and condensation protein B from Streptococcus agalactiae serotype Ia (strain ATCC 27591 / A909 / CDC SS700).